A 381-amino-acid polypeptide reads, in one-letter code: Succinyl-diaminopimelate desuccinylase (381 aa).

H69 is a Zn(2+) binding site. D71 is an active-site residue. D103 contacts Zn(2+). E137 (proton acceptor) is an active-site residue. The Zn(2+) site is built by E138, E166, and H355.

Belongs to the peptidase M20A family. DapE subfamily. Homodimer. It depends on Zn(2+) as a cofactor. Co(2+) is required as a cofactor.

It catalyses the reaction N-succinyl-(2S,6S)-2,6-diaminopimelate + H2O = (2S,6S)-2,6-diaminopimelate + succinate. The protein operates within amino-acid biosynthesis; L-lysine biosynthesis via DAP pathway; LL-2,6-diaminopimelate from (S)-tetrahydrodipicolinate (succinylase route): step 3/3. Its function is as follows. Catalyzes the hydrolysis of N-succinyl-L,L-diaminopimelic acid (SDAP), forming succinate and LL-2,6-diaminopimelate (DAP), an intermediate involved in the bacterial biosynthesis of lysine and meso-diaminopimelic acid, an essential component of bacterial cell walls. The sequence is that of Succinyl-diaminopimelate desuccinylase from Rickettsia massiliae (strain Mtu5).